The sequence spans 860 residues: Leucine--tRNA ligase (860 aa).

The 'HIGH' region signature appears at 42 to 52 (PYPSGRLHMGH). Residues 619 to 623 (KMSKS) carry the 'KMSKS' region motif. Residue K622 coordinates ATP.

This sequence belongs to the class-I aminoacyl-tRNA synthetase family.

The protein localises to the cytoplasm. It carries out the reaction tRNA(Leu) + L-leucine + ATP = L-leucyl-tRNA(Leu) + AMP + diphosphate. This is Leucine--tRNA ligase from Mannheimia succiniciproducens (strain KCTC 0769BP / MBEL55E).